Here is a 29-residue protein sequence, read N- to C-terminus: Cytochrome b6-f complex subunit 8 (29 aa).

A helical transmembrane segment spans residues 3-23 (IVNIAWAALMVVSTFSLTLVV).

Belongs to the PetN family. In terms of assembly, the 4 large subunits of the cytochrome b6-f complex are cytochrome b6, subunit IV (17 kDa polypeptide, PetD), cytochrome f and the Rieske protein, while the 4 small subunits are PetG, PetL, PetM and PetN. The complex functions as a dimer.

Its subcellular location is the plastid. The protein localises to the chloroplast thylakoid membrane. Functionally, component of the cytochrome b6-f complex, which mediates electron transfer between photosystem II (PSII) and photosystem I (PSI), cyclic electron flow around PSI, and state transitions. This is Cytochrome b6-f complex subunit 8 from Huperzia lucidula (Shining clubmoss).